The sequence spans 387 residues: MSVIKMTDLDLAGKRVFIRADLNVPVKDGKVTSDARIRASLPTIELALKQGAKVMVTSHLGRPTEGEYNEEFSLLPVVNYLKDKLSNPVRLVKDYLDGVEVAEGELVVLENVRFNKGEKKDDEALSKKYAALCDVFVMDAFGTAHRAQASTHGIGKFADVACAGPLLAEELDALGKALKEPARPMVAIVGGSKVSTKLTVLDSLSKIADQLIVGGGIANTFVAAQGHNVGKSLYEADLVEEAKRLLTTCDIPVPTDVRVATEFSETATATLKSVNDIKDEEQILDLGDVSAQKLADILKNAKTILWNGPVGVFEFPNFRKGTEIVANAIADSDAFSIAGGGDTLAAIDLFGISDKISYISTGGGAFLEFVEGKVLPAVAMLEERAKK.

Substrate contacts are provided by residues 21–23, R36, 59–62, R113, and R146; these read DLN and HLGR. Residues K197, E314, and 340–343 contribute to the ATP site; that span reads GGDT.

Belongs to the phosphoglycerate kinase family. In terms of assembly, monomer.

It localises to the cytoplasm. It catalyses the reaction (2R)-3-phosphoglycerate + ATP = (2R)-3-phospho-glyceroyl phosphate + ADP. The protein operates within carbohydrate degradation; glycolysis; pyruvate from D-glyceraldehyde 3-phosphate: step 2/5. The chain is Phosphoglycerate kinase from Enterobacter sp. (strain 638).